A 1387-amino-acid polypeptide reads, in one-letter code: Kinesin-like protein KIF15-B (1387 aa).

In terms of domain architecture, Kinesin motor spans 26–364; sequence AIKVFVRIRP…LQFAQRAKLI (339 aa). 110 to 117 serves as a coordination point for ATP; the sequence is GQTGSGKT. The stretch at 369–1383 forms a coiled coil; the sequence is VVNEDTQGNV…NLFLKETKKC (1015 aa). The tract at residues 1138–1387 is necessary for its targeting to microtubule minus ends; sequence NSPVVLAQTP…KETKKCEHCD (250 aa).

This sequence belongs to the TRAFAC class myosin-kinesin ATPase superfamily. Kinesin family. KLP2 subfamily. Homodimer. Dimerization is required for targeting to microtubule minus ends. Found in a complex with tpx2 and microtubules. Its association with microtubules and targeting to microtubule minus ends requires tpx2. As to expression, strongly expressed in testis and weakly in lung (at protein level).

It localises to the cytoplasm. The protein resides in the cytoskeleton. The protein localises to the microtubule organizing center. Its subcellular location is the centrosome. It is found in the spindle. It localises to the spindle pole. Functionally, plus-end directed kinesin-like motor enzyme involved in mitotic spindle assembly. Required for centrosome separation and maintenance of spindle bipolarity during mitosis. The protein is Kinesin-like protein KIF15-B (kif15-b) of Xenopus laevis (African clawed frog).